We begin with the raw amino-acid sequence, 372 residues long: Glutamate 5-kinase (372 aa).

Residue K14 participates in ATP binding. Substrate is bound by residues S54, D141, and N153. 173–174 provides a ligand contact to ATP; the sequence is TD. The region spanning 280-358 is the PUA domain; sequence RGHVVIDAGA…GEIETVLGYM (79 aa).

This sequence belongs to the glutamate 5-kinase family.

It is found in the cytoplasm. The catalysed reaction is L-glutamate + ATP = L-glutamyl 5-phosphate + ADP. Its pathway is amino-acid biosynthesis; L-proline biosynthesis; L-glutamate 5-semialdehyde from L-glutamate: step 1/2. Functionally, catalyzes the transfer of a phosphate group to glutamate to form L-glutamate 5-phosphate. This is Glutamate 5-kinase from Burkholderia ambifaria (strain ATCC BAA-244 / DSM 16087 / CCUG 44356 / LMG 19182 / AMMD) (Burkholderia cepacia (strain AMMD)).